The chain runs to 497 residues: Aldehyde dehydrogenase (497 aa).

241–246 serves as a coordination point for NAD(+); sequence GSTLVG. The active-site Proton acceptor is the E264. The active-site Nucleophile is the C298.

It belongs to the aldehyde dehydrogenase family.

It catalyses the reaction an aldehyde + NAD(+) + H2O = a carboxylate + NADH + 2 H(+). The protein operates within alcohol metabolism; ethanol degradation; acetate from ethanol: step 2/2. The sequence is that of Aldehyde dehydrogenase (aldA) from Emericella nidulans (strain FGSC A4 / ATCC 38163 / CBS 112.46 / NRRL 194 / M139) (Aspergillus nidulans).